A 195-amino-acid polypeptide reads, in one-letter code: 3-hydroxyanthranilate 3,4-dioxygenase (195 aa).

Residue Arg50 coordinates O2. Fe cation-binding residues include His54, Glu60, and His102. Glu60 is a binding site for substrate. Arg106 and Glu116 together coordinate substrate. Positions 131, 136, 170, and 173 each coordinate a divalent metal cation.

The protein belongs to the 3-HAO family. It depends on Fe(2+) as a cofactor.

It localises to the cytoplasm. It carries out the reaction 3-hydroxyanthranilate + O2 = (2Z,4Z)-2-amino-3-carboxymuconate 6-semialdehyde. It participates in cofactor biosynthesis; NAD(+) biosynthesis; quinolinate from L-kynurenine: step 3/3. Catalyzes the oxidative ring opening of 3-hydroxyanthranilate to 2-amino-3-carboxymuconate semialdehyde, which spontaneously cyclizes to quinolinate. This Aspergillus terreus (strain NIH 2624 / FGSC A1156) protein is 3-hydroxyanthranilate 3,4-dioxygenase (bna1).